Consider the following 86-residue polypeptide: Sodium channel neurotoxin MeuNaTxalpha-4 (86 aa).

An N-terminal signal peptide occupies residues 1–19 (MNYLILISFALLVITGVES). An LCN-type CS-alpha/beta domain is found at 21 to 85 (RDAYIAKPHN…VPIRIPGKCH (65 aa)). 4 disulfide bridges follow: C31/C84, C35/C57, C43/C67, and C47/C69. Position 86 (R86) is a propeptide, removed by a carboxypeptidase.

The protein belongs to the long (4 C-C) scorpion toxin superfamily. Sodium channel inhibitor family. Alpha subfamily. Expressed by the venom gland.

It is found in the secreted. Its function is as follows. Alpha toxins bind voltage-independently at site-3 of sodium channels (Nav) and inhibit the inactivation of the activated channels, thereby blocking neuronal transmission. This toxin inhibits inactivation of drosophila DmNav1 (EC(50)=130 nM). This chain is Sodium channel neurotoxin MeuNaTxalpha-4, found in Mesobuthus eupeus (Lesser Asian scorpion).